A 131-amino-acid polypeptide reads, in one-letter code: Profilin (131 aa).

Belongs to the profilin family. Occurs in many kinds of cells as a complex with monomeric actin in a 1:1 ratio.

The protein resides in the cytoplasm. It localises to the cytoskeleton. Functionally, binds to actin and affects the structure of the cytoskeleton. At high concentrations, profilin prevents the polymerization of actin, whereas it enhances it at low concentrations. By binding to PIP2, it inhibits the formation of IP3 and DG. This is Profilin from Arachis hypogaea (Peanut).